We begin with the raw amino-acid sequence, 241 residues long: NLP effector protein 7 (241 aa).

The first 19 residues, 1–19 (MHLCALLIAAAGVLASVRA), serve as a signal peptide directing secretion. Positions 105-115 (AIMYAWYFPKA) match the Conserved undecapeptide motif motif. Positions 125 to 131 (GSRHYWL) match the Conserved heptapeptide motif motif. Residue Asn144 is glycosylated (N-linked (GlcNAc...) asparagine).

The protein belongs to the Necrosis inducing protein (NPP1) family.

Its subcellular location is the secreted. Secreted effector that acts as a pathogen-associated molecular pattern (PAMP) recognized by the plant immune system. Induces necrosis in Nicotiana benthamiana leaves and can induce Phytophthora capsici resistance in Nicotiana benthamiana. Also significantly improves disease resistance of Arabidopsis thaliana to Hyaloperonospora arabidopsidis. causes an inhibition of plant growth which is typically associated with enhanced immunity when over-expressed in Arabidopsis. The chain is NLP effector protein 7 from Plasmopara viticola (Downy mildew of grapevine).